We begin with the raw amino-acid sequence, 66 residues long: Large ribosomal subunit protein bL35 (66 aa).

Positions 1–28 are enriched in basic residues; that stretch reads MPKMKTHRGSAKRFKRTGSGKLKRRHGF. A disordered region spans residues 1–50; the sequence is MPKMKTHRGSAKRFKRTGSGKLKRRHGFTSHMFANKSQKQKRKLRKSAMV.

It belongs to the bacterial ribosomal protein bL35 family.

The sequence is that of Large ribosomal subunit protein bL35 from Listeria monocytogenes serotype 4a (strain HCC23).